We begin with the raw amino-acid sequence, 171 residues long: Shikimate kinase (171 aa).

Glycine 14–threonine 19 contributes to the ATP binding site. Serine 18 is a binding site for Mg(2+). Aspartate 36, arginine 60, and glycine 82 together coordinate substrate. Arginine 120 provides a ligand contact to ATP. Position 139 (arginine 139) interacts with substrate. Position 156 (glutamine 156) interacts with ATP.

The protein belongs to the shikimate kinase family. Monomer. It depends on Mg(2+) as a cofactor.

Its subcellular location is the cytoplasm. It carries out the reaction shikimate + ATP = 3-phosphoshikimate + ADP + H(+). Its pathway is metabolic intermediate biosynthesis; chorismate biosynthesis; chorismate from D-erythrose 4-phosphate and phosphoenolpyruvate: step 5/7. Functionally, catalyzes the specific phosphorylation of the 3-hydroxyl group of shikimic acid using ATP as a cosubstrate. The sequence is that of Shikimate kinase from Shewanella oneidensis (strain ATCC 700550 / JCM 31522 / CIP 106686 / LMG 19005 / NCIMB 14063 / MR-1).